Reading from the N-terminus, the 580-residue chain is Malto-oligosyltrehalose trehalohydrolase (580 aa).

Residues 56–88 (LPDPRSARQPDGVHARSQRWEPPGQFGAARTDT) form a disordered region. The span at 60–69 (RSARQPDGVH) shows a compositional bias: basic and acidic residues. 245–250 (RLDAVH) contacts substrate. Residue aspartate 247 is the Nucleophile of the active site. Glutamate 284 (proton donor) is an active-site residue. Substrate-binding positions include 309–313 (DDIHH) and 379–384 (HDQVGN).

Belongs to the glycosyl hydrolase 13 family.

It is found in the cytoplasm. The catalysed reaction is hydrolysis of (1-&gt;4)-alpha-D-glucosidic linkage in 4-alpha-D-[(1-&gt;4)-alpha-D-glucanosyl]n trehalose to yield trehalose and (1-&gt;4)-alpha-D-glucan.. It participates in glycan biosynthesis; trehalose biosynthesis. Functionally, is involved in the biosynthesis of trehalose but not in that of capsular glucan and glycogen. The polypeptide is Malto-oligosyltrehalose trehalohydrolase (treZ) (Mycobacterium tuberculosis (strain CDC 1551 / Oshkosh)).